Reading from the N-terminus, the 201-residue chain is Heat shock protein beta-1 (201 aa).

The residue at position 15 (serine 15) is a Phosphoserine; by PKA and PKC. The region spanning 83-193 (ALSRQMSSGM…SETTIPVNVE (111 aa)) is the sHSP domain.

It belongs to the small heat shock protein (HSP20) family. As to quaternary structure, homooligomer. Homodimer; becomes monomeric upon activation. Heterooligomer.

Its subcellular location is the cytoplasm. It localises to the nucleus. It is found in the cytoskeleton. The protein resides in the spindle. Functionally, small heat shock protein which functions as a molecular chaperone probably maintaining denatured proteins in a folding-competent state. Plays a role in stress resistance and actin organization. This chain is Heat shock protein beta-1 (hspb1), found in Poeciliopsis lucida (Desert topminnow).